The chain runs to 418 residues: Tyrosine--tRNA ligase 1 (418 aa).

Y34 serves as a coordination point for L-tyrosine. Residues 39–48 (PTADSLHLGH) carry the 'HIGH' region motif. Positions 169 and 173 each coordinate L-tyrosine. Positions 229-233 (KFGKS) match the 'KMSKS' region motif. K232 lines the ATP pocket. The S4 RNA-binding domain occupies 352-418 (LNIVELLVNA…GKKKNFVLTY (67 aa)).

This sequence belongs to the class-I aminoacyl-tRNA synthetase family. TyrS type 1 subfamily. In terms of assembly, homodimer.

It is found in the cytoplasm. The enzyme catalyses tRNA(Tyr) + L-tyrosine + ATP = L-tyrosyl-tRNA(Tyr) + AMP + diphosphate + H(+). In terms of biological role, catalyzes the attachment of tyrosine to tRNA(Tyr) in a two-step reaction: tyrosine is first activated by ATP to form Tyr-AMP and then transferred to the acceptor end of tRNA(Tyr). This Streptococcus thermophilus (strain CNRZ 1066) protein is Tyrosine--tRNA ligase 1.